A 440-amino-acid polypeptide reads, in one-letter code: D-serine dehydratase (440 aa).

Position 116 is an N6-(pyridoxal phosphate)lysine (Lys-116).

This sequence belongs to the serine/threonine dehydratase family. DsdA subfamily. Monomer. Pyridoxal 5'-phosphate is required as a cofactor.

It carries out the reaction D-serine = pyruvate + NH4(+). The sequence is that of D-serine dehydratase from Salmonella choleraesuis (strain SC-B67).